Here is a 182-residue protein sequence, read N- to C-terminus: CD-NTase-associated protein 15 (182 aa).

The next 2 helical transmembrane spans lie at 11–31 (ITGW…CTVW) and 33–53 (IGWI…TIGY).

This sequence belongs to the CBASS Cap15 membrane effector family. As to quaternary structure, the beta barrel domain oligomerizes; in the presence of cyclic nucleotides (probably 3',2'-cGAMP) higher-level oligomers occur.

It localises to the cell membrane. Effector protein of a CBASS antivirus system. CBASS (cyclic oligonucleotide-based antiphage signaling system) provides immunity against bacteriophage. The CD-NTase protein (CdnE) synthesizes cyclic nucleotides in response to infection; these serve as specific second messenger signals. The signals activate a diverse range of effectors, leading to bacterial cell death and thus abortive phage infection. This system triggers membrane disruption without lysis. A type I-B CBASS system. Binds cyclic nucleotide second messenger 3',2'-cGAMP, probably oligomerizing, and induces cell membrane shrinkage and rupture, leading to cell death. In terms of biological role, protects S.aureus against phage infection. When the CBASS operon (cdnE-cap15) is introduced in S.aureus strain RN4220 there is strong protection against lytic DNA phages 80alpha-vir and phi-NM1-gamma-6 but little to no protection against phages phi-NM4-gamma-4 or phi-12-gamma-3. This is CD-NTase-associated protein 15 from Staphylococcus schleiferi.